The chain runs to 65 residues: Large ribosomal subunit protein bL35 (65 aa).

The protein belongs to the bacterial ribosomal protein bL35 family.

The protein is Large ribosomal subunit protein bL35 of Aeromonas salmonicida (strain A449).